A 155-amino-acid polypeptide reads, in one-letter code: Endoribonuclease YbeY (155 aa).

A disordered region spans residues 64–84; the sequence is SFPMDEMRAPGDDEDPPSGLL. Zn(2+)-binding residues include H115, H119, and H125.

Belongs to the endoribonuclease YbeY family. It depends on Zn(2+) as a cofactor.

It localises to the cytoplasm. Its function is as follows. Single strand-specific metallo-endoribonuclease involved in late-stage 70S ribosome quality control and in maturation of the 3' terminus of the 16S rRNA. This chain is Endoribonuclease YbeY, found in Cutibacterium acnes (strain DSM 16379 / KPA171202) (Propionibacterium acnes).